The chain runs to 86 residues: Maxadilan (86 aa).

Residues 1–23 (MKQILLISLVVVLAVFAFNVAEG) form the signal peptide. 2 cysteine pairs are disulfide-bonded: Cys-24/Cys-28 and Cys-37/Cys-74.

In terms of assembly, interacts with human ADCYAP1R1. As to expression, salivary gland (at protein level).

The protein localises to the secreted. Potent vasodilator. Activates mammalian ADCYAP1R1, a PAC1 receptor, and induces cAMP accumulation in host cells. Causes the development of erythema following superficial injection into the rabbit or human skin. Influences adaptive immune responses mediated by host dendritic cells. Reduces surface expression of CD80 on host dendritic cells stimulated with lipopolysaccharides (LPS) and induces concomitant increase in CD86 expression on a subpopulation of these cells. Redirects cytokine secretion by LPS-activated host dendritic cells toward type 2 responses: decreases secretion of TNF-alpha/TNF, IL-12p40/IL12B and IFN-gamma/IFNG, and increases secretion of IL6 and IL10. Reduces ability of host bone marrow-derived dendritic cells to stimulate proliferation of CD4(+) T-cells. Reprograms the effect of LPS-activated host dendritic cells on cytokine secretion profiles in host T-cells: decreases secretion of TNF-alpha/TNF and IFN-gamma/IFNG, increases secretion of IL6 and IL13, and increases secretion of pro-inflammatory cytokine IL-1beta/IL1B in mixed lymphocyte reaction (MLR) cultures. Reduces LPS-induced up-regulation of CCR7 in activated host dendritic cells. Inhibits IFN-gamma/IFNG and IL-12p40/IL12B production by human peripheral blood mononuclear cells. Increases IL6 and decreases TNF-alpha/TNF production by LPS-stimulated human monocytes. Functionally, (Microbial infection) Probably plays a critical role in the enhancement of Leishmania infectivity in the host attributed to sand fly saliva. This is Maxadilan from Lutzomyia longipalpis (Sand fly).